The chain runs to 314 residues: MMASERNQSSTPTFILLGFSEYPEIQVPLFLVFLFVYTVTVVGNLGMIIIIRLNSKLHTIMCFFLSHLSLTDFCFSTVVTPKLLENLVVEYRTISFSGCIMQFCFACIFGVTETFMLAAMAYDRFVAVCKPLLYTTIMSQKLCALLVAGSYTWGIVCSLILTYFLLDLSFCESTFINNFICDHSVIVSASYSDPYISQRLCFIIAIFNEVSSLIIILTSYMLIFTTIMKMRSASGRQKTFSTCASHLTAITIFHGTILFLYCVPNPKTSSLIVTVASVFYTVAIPMLNPLIYSLRNKDINNMFEKLVVTKLIYH.

The Extracellular portion of the chain corresponds to 1-27 (MMASERNQSSTPTFILLGFSEYPEIQV). Asn-7 carries N-linked (GlcNAc...) asparagine glycosylation. A helical membrane pass occupies residues 28–48 (PLFLVFLFVYTVTVVGNLGMI). The Cytoplasmic portion of the chain corresponds to 49-56 (IIIRLNSK). Residues 57–77 (LHTIMCFFLSHLSLTDFCFST) form a helical membrane-spanning segment. Topologically, residues 78–101 (VVTPKLLENLVVEYRTISFSGCIM) are extracellular. The chain crosses the membrane as a helical span at residues 102–122 (QFCFACIFGVTETFMLAAMAY). Residues 123–141 (DRFVAVCKPLLYTTIMSQK) are Cytoplasmic-facing. The helical transmembrane segment at 142 to 162 (LCALLVAGSYTWGIVCSLILT) threads the bilayer. Over 163–198 (YFLLDLSFCESTFINNFICDHSVIVSASYSDPYISQ) the chain is Extracellular. The helical transmembrane segment at 199–219 (RLCFIIAIFNEVSSLIIILTS) threads the bilayer. The Cytoplasmic portion of the chain corresponds to 220-239 (YMLIFTTIMKMRSASGRQKT). Residues 240-260 (FSTCASHLTAITIFHGTILFL) traverse the membrane as a helical segment. At 261 to 273 (YCVPNPKTSSLIV) the chain is on the extracellular side. The helical transmembrane segment at 274-294 (TVASVFYTVAIPMLNPLIYSL) threads the bilayer. At 295–314 (RNKDINNMFEKLVVTKLIYH) the chain is on the cytoplasmic side.

The protein belongs to the G-protein coupled receptor 1 family.

It localises to the cell membrane. In terms of biological role, odorant receptor. The sequence is that of Olfactory receptor 5D13 (OR5D13) from Homo sapiens (Human).